The primary structure comprises 522 residues: L-tyrosine/L-DOPA decarboxylase 2 (522 aa).

Repeat copies occupy residues Lys75–Glu132 and Val135–His186. A 2 X approximate tandem repeats region spans residues Lys75–His186. 4 residues coordinate pyridoxal 5'-phosphate: Thr163, Cys164, Thr258, and Asn312. An N6-(pyridoxal phosphate)lysine modification is found at Lys315.

It belongs to the group II decarboxylase family. The cofactor is pyridoxal 5'-phosphate. As to expression, strongly expressed in all tissues, particularly in thick roots.

The enzyme catalyses L-tyrosine + H(+) = tyramine + CO2. It catalyses the reaction L-dopa + H(+) = dopamine + CO2. Its pathway is aromatic compound metabolism. It participates in alkaloid biosynthesis. In terms of biological role, aromatic amino acid decarboxylase participating in the biosynthesis of natural products derived from phenylethylamine, including mescaline, a natural hallucinogen potentially used in psychotherapeutic treatments. Catalyzes the decarboxylation of L-tyrosine and L-DOPA. This Lophophora williamsii (Peyote) protein is L-tyrosine/L-DOPA decarboxylase 2.